The chain runs to 151 residues: 6,7-dimethyl-8-ribityllumazine synthase (151 aa).

5-amino-6-(D-ribitylamino)uracil-binding positions include phenylalanine 18, 49–51 (ALE), and 74–76 (CVI). Residue 79-80 (ET) participates in (2S)-2-hydroxy-3-oxobutyl phosphate binding. Histidine 82 acts as the Proton donor in catalysis. Residue asparagine 107 participates in 5-amino-6-(D-ribitylamino)uracil binding. Position 121 (arginine 121) interacts with (2S)-2-hydroxy-3-oxobutyl phosphate.

Belongs to the DMRL synthase family.

The enzyme catalyses (2S)-2-hydroxy-3-oxobutyl phosphate + 5-amino-6-(D-ribitylamino)uracil = 6,7-dimethyl-8-(1-D-ribityl)lumazine + phosphate + 2 H2O + H(+). It functions in the pathway cofactor biosynthesis; riboflavin biosynthesis; riboflavin from 2-hydroxy-3-oxobutyl phosphate and 5-amino-6-(D-ribitylamino)uracil: step 1/2. Functionally, catalyzes the formation of 6,7-dimethyl-8-ribityllumazine by condensation of 5-amino-6-(D-ribitylamino)uracil with 3,4-dihydroxy-2-butanone 4-phosphate. This is the penultimate step in the biosynthesis of riboflavin. The chain is 6,7-dimethyl-8-ribityllumazine synthase from Bartonella tribocorum (strain CIP 105476 / IBS 506).